Here is a 245-residue protein sequence, read N- to C-terminus: 1-(5-phosphoribosyl)-5-[(5-phosphoribosylamino)methylideneamino] imidazole-4-carboxamide isomerase (245 aa).

Asp-7 (proton acceptor) is an active-site residue. Asp-129 (proton donor) is an active-site residue.

This sequence belongs to the HisA/HisF family.

Its subcellular location is the cytoplasm. It catalyses the reaction 1-(5-phospho-beta-D-ribosyl)-5-[(5-phospho-beta-D-ribosylamino)methylideneamino]imidazole-4-carboxamide = 5-[(5-phospho-1-deoxy-D-ribulos-1-ylimino)methylamino]-1-(5-phospho-beta-D-ribosyl)imidazole-4-carboxamide. It participates in amino-acid biosynthesis; L-histidine biosynthesis; L-histidine from 5-phospho-alpha-D-ribose 1-diphosphate: step 4/9. The sequence is that of 1-(5-phosphoribosyl)-5-[(5-phosphoribosylamino)methylideneamino] imidazole-4-carboxamide isomerase from Shewanella amazonensis (strain ATCC BAA-1098 / SB2B).